The chain runs to 470 residues: Cholesterol 7-desaturase nvd 1 (470 aa).

The helical transmembrane segment at 67 to 87 (LALCIAGFSVLMYFLYVLVFV) threads the bilayer. The Rieske domain occupies 136–238 (FRLVDSQQLE…CREVNKAIFV (103 aa)). 4 residues coordinate [2Fe-2S] cluster: Cys-176, His-178, Cys-196, and His-199.

The protein belongs to the cholesterol 7-desaturase family. It depends on [2Fe-2S] cluster as a cofactor.

Its subcellular location is the membrane. The catalysed reaction is cholesterol + NADPH + O2 + H(+) = 7-dehydrocholesterol + NADP(+) + 2 H2O. The enzyme catalyses cholesterol + NADH + O2 + H(+) = 7-dehydrocholesterol + NAD(+) + 2 H2O. The protein operates within steroid hormone biosynthesis; dafachronic acid biosynthesis. Its function is as follows. Catalyzes the production of 7-dehydrocholesterol (7-DHC or cholesta-5,7-dien-3beta-ol) by inserting a double bond (desaturating) at the C7-C8 single bond of cholesterol. Essential regulator of steroid biosynthesis as this reaction is the first step in the synthesis of the steroid hormone Delta(7)-dafachronic acid. This chain is Cholesterol 7-desaturase nvd 1, found in Ciona intestinalis (Transparent sea squirt).